A 246-amino-acid chain; its full sequence is MSDLTSPSITAVRDLREASCGPIGAPAVTSDLSENVILTSLDDLHNWARLSSLWPLLYGTACCFIEFAALLGSRFDFDRFGLVPRSSPRQADLLIVAGTVTMKMAPALVRLYEQMPEPKYVIAMGACTITGGMFSADSTTAVRGVDKLIPVDLYMPGCPPRPEAIFDAVIKLRKKVGDESLAERRKHVQTHRYFTVSHQMKRVEEQVTGSYLRAETQKAALAAAPAGQTLATDAAVLTPALEAVES.

Residues cysteine 62, cysteine 63, cysteine 127, and cysteine 158 each contribute to the [4Fe-4S] cluster site.

The protein belongs to the complex I 20 kDa subunit family. As to quaternary structure, NDH-1 can be composed of about 15 different subunits; different subcomplexes with different compositions have been identified which probably have different functions. Requires [4Fe-4S] cluster as cofactor.

It localises to the cellular thylakoid membrane. It catalyses the reaction a plastoquinone + NADH + (n+1) H(+)(in) = a plastoquinol + NAD(+) + n H(+)(out). The catalysed reaction is a plastoquinone + NADPH + (n+1) H(+)(in) = a plastoquinol + NADP(+) + n H(+)(out). In terms of biological role, NDH-1 shuttles electrons from an unknown electron donor, via FMN and iron-sulfur (Fe-S) centers, to quinones in the respiratory and/or the photosynthetic chain. The immediate electron acceptor for the enzyme in this species is believed to be plastoquinone. Couples the redox reaction to proton translocation, and thus conserves the redox energy in a proton gradient. Cyanobacterial NDH-1 also plays a role in inorganic carbon-concentration. The chain is NAD(P)H-quinone oxidoreductase subunit K from Parasynechococcus marenigrum (strain WH8102).